A 474-amino-acid polypeptide reads, in one-letter code: tRNA-2-methylthio-N(6)-dimethylallyladenosine synthase (474 aa).

The 118-residue stretch at 3 to 120 (KKLHIKTWGC…LPEMINHVQG (118 aa)) folds into the MTTase N-terminal domain. Residues C12, C49, C83, C157, C161, and C164 each coordinate [4Fe-4S] cluster. The 233-residue stretch at 143–375 (RAEGPTAFVS…QQRITQQAME (233 aa)) folds into the Radical SAM core domain. One can recognise a TRAM domain in the interval 378–441 (REMVGTVQRI…ASSLRGILLR (64 aa)).

Belongs to the methylthiotransferase family. MiaB subfamily. As to quaternary structure, monomer. It depends on [4Fe-4S] cluster as a cofactor.

It localises to the cytoplasm. The catalysed reaction is N(6)-dimethylallyladenosine(37) in tRNA + (sulfur carrier)-SH + AH2 + 2 S-adenosyl-L-methionine = 2-methylsulfanyl-N(6)-dimethylallyladenosine(37) in tRNA + (sulfur carrier)-H + 5'-deoxyadenosine + L-methionine + A + S-adenosyl-L-homocysteine + 2 H(+). Catalyzes the methylthiolation of N6-(dimethylallyl)adenosine (i(6)A), leading to the formation of 2-methylthio-N6-(dimethylallyl)adenosine (ms(2)i(6)A) at position 37 in tRNAs that read codons beginning with uridine. This is tRNA-2-methylthio-N(6)-dimethylallyladenosine synthase from Yersinia enterocolitica serotype O:8 / biotype 1B (strain NCTC 13174 / 8081).